The following is a 308-amino-acid chain: Aldo-keto reductase AKR2E4 (308 aa).

Residues 22–29 and D53 contribute to the NADP(+) site; that span reads GTGRGTAK. The Proton donor role is filled by Y58. Residues 158 to 159, R215, and 259 to 269 contribute to the NADP(+) site; these read SN and KSTNKQRIAQN.

This sequence belongs to the short-chain dehydrogenases/reductases (SDR) family. As to expression, detected in hemolymph (at protein level). Detected in larval ovary.

Subject to substrate inhibition by high levels of 3-dehydroecdysone. Functionally, NADP-dependent oxidoreductase with high 3-dehydroecdysone reductase activity. May play a role in the regulation of molting. Has lower activity with phenylglyoxal and isatin (in vitro). Has no activity with NADH as cosubstrate. Has no activity with nitrobenzaldehyde and 3-hydroxybenzaldehyde. In Bombyx mori (Silk moth), this protein is Aldo-keto reductase AKR2E4 (akr2e).